We begin with the raw amino-acid sequence, 412 residues long: Branched-chain alpha-ketoacid dehydrogenase kinase (412 aa).

A mitochondrion-targeting transit peptide spans Met-1–Arg-30. Position 31 is a phosphoserine (Ser-31). One can recognise a Histidine kinase domain in the interval Leu-159–Asp-404. An N6-acetyllysine mark is found at Lys-192 and Lys-233. The ATP site is built by Asn-279 and Asp-315. A Mg(2+)-binding site is contributed by Asn-279. K(+)-binding residues include Val-328, Asp-330, and Phe-333. ATP contacts are provided by Thr-334 and Thr-335. A phosphoserine mark is found at Ser-356 and Ser-360. Residues His-364, Gly-367, and Leu-370 each coordinate ATP. Position 367 (Gly-367) interacts with K(+).

This sequence belongs to the PDK/BCKDK protein kinase family. In terms of assembly, homodimer. Homotetramer. Dimerizes through interaction of two opposing nucleotide-binding domains. Interacts with E2 component of the branched-chain alpha-ketoacid dehydrogenase (BCKDH) complex. Competes with BCKDK for binding to the E2 component; this interaction is modulated by branched-chain alpha-keto acids. At steady state, BCKDH holoenzyme contains BCKDK and BCKDHA is phosphorylated. In response to high levels of branched-chain alpha-keto acids, the inhibitory BCKDK is replaced by activating PPM1K leading to BCKDHA dephosphorylation and BCAA degradation. Post-translationally, autophosphorylated. In terms of tissue distribution, expressed in heart and liver.

The protein localises to the mitochondrion matrix. The protein resides in the mitochondrion. It carries out the reaction L-seryl-[3-methyl-2-oxobutanoate dehydrogenase] + ATP = O-phospho-L-seryl-[3-methyl-2-oxobutanoate dehydrogenase] + ADP + H(+). The catalysed reaction is L-seryl-[protein] + ATP = O-phospho-L-seryl-[protein] + ADP + H(+). With respect to regulation, the ATP-ase activity is up-regulated by potassium and rubidium ions but not by sodium ions. Up-regulated in the presence of apo- or lipoylated-DBT/E2b subunit of the BCKDH complex. Serine/threonine-protein kinase component of macronutrients metabolism. Forms a functional kinase and phosphatase pair with PPM1K, serving as a metabolic regulatory node that coordinates branched-chain amino acids (BCAAs) with glucose and lipid metabolism via two distinct phosphoprotein targets: mitochondrial BCKDHA subunit of the branched-chain alpha-ketoacid dehydrogenase (BCKDH) complex and cytosolic ACLY, a lipogenic enzyme of Krebs cycle. Phosphorylates and inactivates mitochondrial BCKDH complex a multisubunit complex consisting of three multimeric components each involved in different steps of BCAA catabolism: E1 composed of BCKDHA and BCKDHB, E2 core composed of DBT monomers, and E3 composed of DLD monomers. Associates with the E2 component of BCKDH complex and phosphorylates BCKDHA on Ser-333, leading to conformational changes that interrupt substrate channeling between E1 and E2 and inactivates the BCKDH complex. phosphorylates ACLY on Ser-455 in response to changes in cellular carbohydrate abundance such as occurs during fasting to feeding metabolic transition. Refeeding stimulates MLXIPL/ChREBP transcription factor, leading to increased BCKDK to PPM1K expression ratio, phosphorylation and activation of ACLY that ultimately results in the generation of malonyl-CoA and oxaloacetate immediate substrates of de novo lipogenesis and glucogenesis, respectively. Recognizes phosphosites having SxxE/D canonical motif. This chain is Branched-chain alpha-ketoacid dehydrogenase kinase (Bckdk), found in Rattus norvegicus (Rat).